Reading from the N-terminus, the 527-residue chain is Sensory neuron membrane protein 1 (527 aa).

The Cytoplasmic portion of the chain corresponds to 1–10 (MQLQKPLKIG). A helical membrane pass occupies residues 11–31 (LGMMGAGLFGIIFGWVLFPVI). Residues 32 to 456 (LKSQLKKEMA…LKNQLFIPKR (425 aa)) are Extracellular-facing. N-linked (GlcNAc...) asparagine glycans are attached at residues Asn67 and Asn229. Intrachain disulfides connect Cys268/Cys333, Cys297/Cys352, and Cys335/Cys341. The N-linked (GlcNAc...) asparagine glycan is linked to Asn440. A helical transmembrane segment spans residues 457-477 (IVSVVKWLLAGVGFVGLVGSL). The Cytoplasmic segment spans residues 478 to 527 (VYQFKGKMINFALSPSSAPVTKVNPEINQQNQPKDISIIGESQNPPKVDM).

This sequence belongs to the CD36 family. In terms of tissue distribution, principal component of the olfactory cilia membrane. Localizes to the antennal tissue with two to three fold higher expression in males compared to females.

Its subcellular location is the cell membrane. Functionally, plays an olfactory role that is not restricted to pheromone sensitivity. In Ostrinia nubilalis (European corn borer), this protein is Sensory neuron membrane protein 1.